We begin with the raw amino-acid sequence, 452 residues long: Trigger factor (452 aa).

The PPIase FKBP-type domain occupies 170–256; it reads DSIVKVDFVE…IKSIKKRDLP (87 aa).

This sequence belongs to the FKBP-type PPIase family. Tig subfamily.

It is found in the cytoplasm. It carries out the reaction [protein]-peptidylproline (omega=180) = [protein]-peptidylproline (omega=0). Its function is as follows. Involved in protein export. Acts as a chaperone by maintaining the newly synthesized protein in an open conformation. Functions as a peptidyl-prolyl cis-trans isomerase. The polypeptide is Trigger factor (Borreliella afzelii (strain PKo) (Borrelia afzelii)).